A 1411-amino-acid chain; its full sequence is Regulating synaptic membrane exocytosis protein 2 (1411 aa).

Positions 1 to 33 (MSAPVGPRGRLAPIPAASQPPLQPEMPDLSHLT) are disordered. Positions 26 to 185 (MPDLSHLTEE…TKSGAWFYNS (160 aa)) constitute a RabBD domain. The segment at 117-173 (KGDAPTCGICHKTKFADGCGHNCSYCQTKFCARCGGRVSLRSNKVMWVCNLCRKQQE) adopts an FYVE-type zinc-finger fold. The Zn(2+) site is built by Cys-123, Cys-126, Cys-139, Cys-142, Cys-147, Cys-150, Cys-165, and Cys-168. 6 stretches are compositionally biased toward basic and acidic residues: residues 203 to 216 (NEEA…KLHE), 273 to 287 (DQNR…REEY), 318 to 329 (DSDHLSYRDSNR), 348 to 366 (RDEY…RYRS), 382 to 401 (EQMR…RHSD), and 410 to 434 (EDSR…RRAA). Disordered stretches follow at residues 203 to 598 (NEEA…SERQ) and 623 to 650 (SGVD…WQPS). Ser-400 carries the post-translational modification Phosphoserine. Polar residues predominate over residues 451–463 (GPSSYAQRTTNHS). Basic and acidic residues predominate over residues 475-492 (DRPDLRRTDSLRKQHHLD). Residues 510-521 (RNDSLSSDQSES) are compositionally biased toward polar residues. Positions 528 to 537 (KPHKSKKGGK) are enriched in basic residues. A compositionally biased stretch (acidic residues) spans 558–568 (SCDDVEIESES). Basic and acidic residues-rich tracts occupy residues 569–583 (VSEK…RKTS) and 634–644 (NEEHSHSDKHP). Positions 668–754 (DGSVPRDSGA…EPQVELVVSR (87 aa)) constitute a PDZ domain. Phosphothreonine is present on Thr-689. A disordered region spans residues 762 to 793 (IPDSTHAQLESSSSSFESQKMDRPSISVTSPM). A phosphoserine mark is found at Ser-791 and Ser-794. The C2 1 domain occupies 805 to 928 (LSGQLSIKLW…ALLDDEPHWY (124 aa)). 2 disordered regions span residues 939 to 973 (PLPH…SEVS) and 993 to 1190 (DLQS…STET). 2 stretches are compositionally biased toward polar residues: residues 994–1015 (LQSS…SPSG) and 1049–1059 (RTMTGHYNTIS). Positions 1060–1113 (RMDRHRVMDDHYSPDRDRDCEAADRQPYHRSRSTEQRPLLERTTTRSRSTERPD) are enriched in basic and acidic residues. Polar residues predominate over residues 1143–1153 (GSVQTSPSSTP). Ser-1148 is subject to Phosphoserine. The 119-residue stretch at 1257 to 1375 (AMGDIQVGMM…ELSNMVIGWF (119 aa)) folds into the C2 2 domain. Residues Ser-1396 and Ser-1399 each carry the phosphoserine modification.

In terms of assembly, interacts with RAB3A and RAB3B that have been activated by GTP-binding. Interacts with RAB3C, RAB3D and RAB26. Interacts with TSPOAP1 and RIMBP2. Interacts with PPFIA3 and PPFIA4. Interacts via its zinc finger with the first C2 domain of UNC13A. Forms a complex consisting of UNC13A, RIMS2 and RAB3A. Heterodimer with PCLO. Part of a ternary complex involving PCLO and EPAC2. In terms of tissue distribution, widely expressed. Expressed in melanocytes. In fetal tissues, predominantly expressed in the brain. In the retina, expressed in the outer plexiform layer (at protein level). In the cerebellum, expressed in Purkinje cells (at protein level). In the pancreas, expressed in Langerhans islets (at protein level).

It is found in the cell membrane. The protein localises to the synapse. It localises to the presynaptic cell membrane. Its function is as follows. Rab effector involved in exocytosis. May act as scaffold protein. Plays a role in dendrite formation by melanocytes. This is Regulating synaptic membrane exocytosis protein 2 (RIMS2) from Homo sapiens (Human).